We begin with the raw amino-acid sequence, 122 residues long: Large ribosomal subunit protein bL12 (122 aa).

The protein belongs to the bacterial ribosomal protein bL12 family. Homodimer. Part of the ribosomal stalk of the 50S ribosomal subunit. Forms a multimeric L10(L12)X complex, where L10 forms an elongated spine to which 2 to 4 L12 dimers bind in a sequential fashion. Binds GTP-bound translation factors.

Functionally, forms part of the ribosomal stalk which helps the ribosome interact with GTP-bound translation factors. Is thus essential for accurate translation. The polypeptide is Large ribosomal subunit protein bL12 (Latilactobacillus sakei subsp. sakei (strain 23K) (Lactobacillus sakei subsp. sakei)).